A 264-amino-acid polypeptide reads, in one-letter code: Undecaprenyl-diphosphatase (264 aa).

8 helical membrane passes run 1 to 21 (MEIS…FLPI), 39 to 59 (QGLA…LFYF), 83 to 103 (SLLV…GLLF), 113 to 133 (SGVV…FADL), 143 to 163 (MTIK…IPGV), 184 to 204 (ANFS…LESI), 220 to 240 (LGVI…MGII), and 243 to 263 (IRML…LYLF).

Belongs to the UppP family.

Its subcellular location is the cell inner membrane. It carries out the reaction di-trans,octa-cis-undecaprenyl diphosphate + H2O = di-trans,octa-cis-undecaprenyl phosphate + phosphate + H(+). In terms of biological role, catalyzes the dephosphorylation of undecaprenyl diphosphate (UPP). Confers resistance to bacitracin. This is Undecaprenyl-diphosphatase from Campylobacter concisus (strain 13826).